The chain runs to 338 residues: RNA 3'-terminal phosphate cyclase (338 aa).

ATP-binding positions include Gln103 and 283 to 287; that span reads YLADQ. Catalysis depends on His308, which acts as the Tele-AMP-histidine intermediate.

Belongs to the RNA 3'-terminal cyclase family. Type 1 subfamily.

The protein localises to the cytoplasm. It carries out the reaction a 3'-end 3'-phospho-ribonucleotide-RNA + ATP = a 3'-end 2',3'-cyclophospho-ribonucleotide-RNA + AMP + diphosphate. In terms of biological role, catalyzes the conversion of 3'-phosphate to a 2',3'-cyclic phosphodiester at the end of RNA. The mechanism of action of the enzyme occurs in 3 steps: (A) adenylation of the enzyme by ATP; (B) transfer of adenylate to an RNA-N3'P to produce RNA-N3'PP5'A; (C) and attack of the adjacent 2'-hydroxyl on the 3'-phosphorus in the diester linkage to produce the cyclic end product. The biological role of this enzyme is unknown but it is likely to function in some aspects of cellular RNA processing. In Escherichia coli O6:H1 (strain CFT073 / ATCC 700928 / UPEC), this protein is RNA 3'-terminal phosphate cyclase.